A 618-amino-acid polypeptide reads, in one-letter code: 1-deoxy-D-xylulose-5-phosphate synthase (618 aa).

Thiamine diphosphate is bound by residues histidine 70 and 111–113 (GHS). Aspartate 142 provides a ligand contact to Mg(2+). Thiamine diphosphate contacts are provided by residues 143 to 144 (GS), asparagine 171, tyrosine 278, and glutamate 360. Asparagine 171 contacts Mg(2+).

Belongs to the transketolase family. DXPS subfamily. In terms of assembly, homodimer. Requires Mg(2+) as cofactor. It depends on thiamine diphosphate as a cofactor.

It carries out the reaction D-glyceraldehyde 3-phosphate + pyruvate + H(+) = 1-deoxy-D-xylulose 5-phosphate + CO2. It functions in the pathway metabolic intermediate biosynthesis; 1-deoxy-D-xylulose 5-phosphate biosynthesis; 1-deoxy-D-xylulose 5-phosphate from D-glyceraldehyde 3-phosphate and pyruvate: step 1/1. Catalyzes the acyloin condensation reaction between C atoms 2 and 3 of pyruvate and glyceraldehyde 3-phosphate to yield 1-deoxy-D-xylulose-5-phosphate (DXP). This is 1-deoxy-D-xylulose-5-phosphate synthase from Helicobacter pylori (strain HPAG1).